The chain runs to 188 residues: Photosystem I assembly protein Ycf4 (188 aa).

2 consecutive transmembrane segments (helical) span residues 26–46 (IWWG…GLSS) and 70–90 (LLFY…TIIL).

Belongs to the Ycf4 family.

It is found in the cellular thylakoid membrane. Seems to be required for the assembly of the photosystem I complex. The sequence is that of Photosystem I assembly protein Ycf4 from Rippkaea orientalis (strain PCC 8801 / RF-1) (Cyanothece sp. (strain PCC 8801)).